Here is a 145-residue protein sequence, read N- to C-terminus: Enhancer of mRNA-decapping protein 2 (145 aa).

2 disordered regions span residues 1 to 74 (MGSE…DKAT) and 89 to 115 (PKKK…IDSK). A compositionally biased stretch (polar residues) spans 29-42 (TKTQILVPPTQSLP). Residues 55–73 (QRREPRERTSKTGHEDDKA) show a composition bias toward basic and acidic residues. Residues 89 to 102 (PKKKSCKYKKKKTR) are compositionally biased toward basic residues.

The protein belongs to the EDC family.

The protein localises to the cytoplasm. Its subcellular location is the nucleus. In terms of biological role, mRNA-binding protein which stimulates mRNA decapping by DCP1 and DCP2. The chain is Enhancer of mRNA-decapping protein 2 (EDC2) from Saccharomyces cerevisiae (strain ATCC 204508 / S288c) (Baker's yeast).